A 574-amino-acid chain; its full sequence is Phospholipase B-like protein A (574 aa).

The N-terminal stretch at 1-20 is a signal peptide; the sequence is MRVIRSLLLLTIAIIGSVLS. 3 N-linked (GlcNAc...) asparagine glycosylation sites follow: Asn-159, Asn-195, and Asn-415.

Belongs to the phospholipase B-like family.

It is found in the secreted. In terms of biological role, phospholipase that removes both fatty-acid chains from phosphatidylcholine and produces the water-soluble glycerophosphorylcholine. In addition to phosphatidylcholine deacylation, it also hydrolyzes phosphatidylinositol and phosphatidylethanolamine. The chain is Phospholipase B-like protein A (plbA) from Dictyostelium discoideum (Social amoeba).